Consider the following 553-residue polypeptide: Transcription factor 7-like 1 (553 aa).

The span at 1 to 11 (MPQLNSGGGDE) shows a compositional bias: gly residues. The interval 1 to 61 (MPQLNSGGGD…SENHSSDSDS (61 aa)) is interaction with CTNNB1. Disordered stretches follow at residues 1 to 77 (MPQL…EKPR), 183 to 213 (GTPPGHLSPEIDPKTGIPRPPHPSELSPYYP), and 392 to 474 (SARD…LTTK). Composition is skewed to basic and acidic residues over residues 17 to 32 (ELIRFKDEGEQEEKSP) and 52 to 77 (SENHSSDSDSEVERRPPPRETFEKPR). The segment at 109–312 (LGGHYLPNGA…SPNLITKPSV (204 aa)) is interaction with AES and TLE4. The HMG box DNA-binding region spans 324 to 392 (IKKPLNAFML…LHSQLYPTWS (69 aa)). The segment covering 407 to 416 (KQSPEMEITK) has biased composition (basic and acidic residues). Positions 408 to 553 (QSPEMEITKT…PLSLVTKSSD (146 aa)) are interaction with CTBP. Low complexity predominate over residues 444–463 (SPATPSAALASPAAPAATHS). Residues 464 to 473 (EQAQPLSLTT) show a composition bias toward polar residues.

It belongs to the TCF/LEF family. Interacts with csnk1e, ctnnb1, ctbp, dact1 and gsk3b. May interact with ase and tle4. In terms of processing, phosphorylated. Phosphorylation by csnk1e promotes binding to ctnnb1 while phosphorylation by gsk3b may reverse this effect.

The protein resides in the nucleus. Its function is as follows. Participates in the Wnt signaling pathway. Binds to DNA and acts as a repressor in the absence of ctnnb1, and as an activator in its presence. Required early in development for the establishment of the dorsal body axis in response to maternal Wnt signaling. The chain is Transcription factor 7-like 1 (tcf7l1) from Xenopus tropicalis (Western clawed frog).